Reading from the N-terminus, the 425-residue chain is E3 ubiquitin-protein ligase GW2 (425 aa).

Residues 62–105 (CPICFLYYPSLNRSKCCSKGICTECFLQMKPTHTAQPTQCPFCK) form an RING-type; degenerate zinc finger.

As to expression, expressed in roots, shoots, leaves, inflorescence meristems, stamens, pistils, spikelet hulls and endosperms 4 days after fertilization.

Its subcellular location is the cytoplasm. The enzyme catalyses S-ubiquitinyl-[E2 ubiquitin-conjugating enzyme]-L-cysteine + [acceptor protein]-L-lysine = [E2 ubiquitin-conjugating enzyme]-L-cysteine + N(6)-ubiquitinyl-[acceptor protein]-L-lysine.. Its pathway is protein modification; protein ubiquitination. E3 ubiquitin-protein ligase involved in the regulation of grain size. May limit grain width and weight by restricting cell proliferation of the spikelet hull. Possesses E3 ubiquitin-protein ligase activity in vitro. This Oryza sativa subsp. indica (Rice) protein is E3 ubiquitin-protein ligase GW2.